The following is a 185-amino-acid chain: Neuronal vesicle trafficking-associated protein 1 (185 aa).

Topologically, residues 1–82 (MVKLGNNFAE…ITEGVTERFK (82 aa)) are cytoplasmic. Residues 83–103 (VSVLVLFALAFLTCVVFLVVY) traverse the membrane as a helical; Signal-anchor for type II membrane protein segment. Residues 104-185 (KVYKYDRACP…QETEAAEKSA (82 aa)) are Lumenal-facing. Positions 129 to 164 (ESYYTEQDSSAREKFYTVINHYNVAKQSITRSVSPW) are required for GRIP1 interaction.

The protein belongs to the NSG family. As to quaternary structure, forms a complex with GRIP1, GRIA2 and STX12 through direct interaction with GRIP1; controls the intracellular fate of AMPAR and the endosomal sorting of the GRIA2 subunit toward recycling and membrane targeting. Interacts with STX12. Interacts with APP; could regulate APP processing. Interacts with FAM171A1. As to expression, pituitary and less in adrenal gland and testis. Expressed in the hippocampus throughout development. At P0, highly and broadly expressed throughout the cortical plate, but is down-regulated overall at P8 and P14, but remains relatively enriched in layer V. At P0 is expressed ubiquitously in the developing cerebellum namely Purkinje neurons as well as granule neurons. However, it becomes restricted to Purkinje cells by P8. This exclusive expression in Purkinje cells is maintained throughout adulthood.

The protein resides in the membrane. It is found in the golgi apparatus. The protein localises to the trans-Golgi network membrane. Its subcellular location is the endosome membrane. It localises to the cell projection. The protein resides in the dendrite. It is found in the early endosome membrane. The protein localises to the late endosome membrane. Its subcellular location is the lysosome lumen. It localises to the recycling endosome membrane. The protein resides in the cytoplasmic vesicle membrane. It is found in the golgi stack membrane. The protein localises to the endosome. Its subcellular location is the multivesicular body membrane. It localises to the endoplasmic reticulum membrane. Its function is as follows. Plays a role in the recycling mechanism in neurons of multiple receptors, including AMPAR, APP and L1CAM and acts at the level of early endosomes to promote sorting of receptors toward a recycling pathway. Regulates sorting and recycling of GRIA2 through interaction with GRIP1 and then contributes to the regulation of synaptic transmission and plasticity by affecting the recycling and targeting of AMPA receptors to the synapse. Is required for faithful sorting of L1CAM to axons by facilitating trafficking from somatodendritic early endosome or the recycling endosome. In an other hand, induces apoptosis via the activation of CASP3 in response to DNA damage. The polypeptide is Neuronal vesicle trafficking-associated protein 1 (Mus musculus (Mouse)).